The primary structure comprises 589 residues: Aspartate--tRNA ligase (589 aa).

E174 contributes to the L-aspartate binding site. Residues Q198 to K201 form an aspartate region. R220 lines the L-aspartate pocket. ATP-binding positions include R220–E222 and Q229. L-aspartate is bound at residue H448. E483 contacts ATP. R490 contributes to the L-aspartate binding site. G535 to R538 provides a ligand contact to ATP.

This sequence belongs to the class-II aminoacyl-tRNA synthetase family. Type 1 subfamily. Homodimer.

It localises to the cytoplasm. The enzyme catalyses tRNA(Asp) + L-aspartate + ATP = L-aspartyl-tRNA(Asp) + AMP + diphosphate. Functionally, catalyzes the attachment of L-aspartate to tRNA(Asp) in a two-step reaction: L-aspartate is first activated by ATP to form Asp-AMP and then transferred to the acceptor end of tRNA(Asp). This is Aspartate--tRNA ligase from Xylella fastidiosa (strain M12).